Here is a 402-residue protein sequence, read N- to C-terminus: MRFIDEAIVTVKAGDGGNGIVSFRREKYVPRGGPDGGDGGKGGDVFVVADDNTNTLVDYRYTRRYDAGRGENGHSKNCSGKGADNIYLRVPIGTTIVNNETGEVIGDLTEIGQELLIAKGGDGGLGNTHFKSSTNQAPRKATSGFEGELKELKFELKVVADVGLIGLPNAGKSTFIRQVSSAKPKVADYPFTTLVPNLGVVDVGVHRSFVMADIPGLIEGASEGAGLGIRFLKHVARTRRLLHILDIKPIDGSDPVENGRVILNELERFSPELANLPQILILNKIDQVPDADELNELCLHIVAELGWTGAVFRTSTLTGAGVDDVKYHLMNEIEREQEREEEDPMFAQAQKERFERLEAEVRLNTEEQKEAYRAARRAAREAAFNNELDDDDDDGVEVVYAP.

The Obg domain occupies 1–159; it reads MRFIDEAIVT…KELKFELKVV (159 aa). The OBG-type G domain occupies 160 to 334; that stretch reads ADVGLIGLPN…VKYHLMNEIE (175 aa). GTP is bound by residues 166-173, 191-195, 213-216, 283-286, and 315-317; these read GLPNAGKS, FTTLV, DIPG, NKID, and STL. Mg(2+)-binding residues include Ser-173 and Thr-193. A disordered region spans residues 382-402; it reads AAFNNELDDDDDDGVEVVYAP. Residues 387–396 show a composition bias toward acidic residues; the sequence is ELDDDDDDGV.

This sequence belongs to the TRAFAC class OBG-HflX-like GTPase superfamily. OBG GTPase family. In terms of assembly, monomer. Mg(2+) serves as cofactor.

The protein localises to the cytoplasm. Its function is as follows. An essential GTPase which binds GTP, GDP and possibly (p)ppGpp with moderate affinity, with high nucleotide exchange rates and a fairly low GTP hydrolysis rate. Plays a role in control of the cell cycle, stress response, ribosome biogenesis and in those bacteria that undergo differentiation, in morphogenesis control. This is GTPase Obg from Psychrobacter sp. (strain PRwf-1).